We begin with the raw amino-acid sequence, 138 residues long: Acid shock protein (138 aa).

An N-terminal signal peptide occupies residues 1–21; it reads MKKVLALIVAATMGLSSVAFA. The propeptide occupies 22-85; sequence ADAVAPAAAA…TKKAPAQKAQ (64 aa). The segment covering 31 to 50 has biased composition (low complexity); that stretch reads APAATTTAAPAAAATKAPAK. The tract at residues 31–138 is disordered; the sequence is APAATTTAAP…ATKKAAPAAK (108 aa). Basic residues-rich tracts occupy residues 51 to 77 and 122 to 131; these read ATHH…KATK and AAKKHHKATK.

It belongs to the Asr family. Proteolytic processing gives rise to the active protein.

The protein resides in the periplasm. Required for growth and/or survival at acidic conditions. This is Acid shock protein from Serratia proteamaculans (strain 568).